The sequence spans 188 residues: Elongation factor P (188 aa).

The residue at position 34 (lysine 34) is an N6-(3,6-diaminohexanoyl)-5-hydroxylysine.

Belongs to the elongation factor P family. May be beta-lysylated on the epsilon-amino group of Lys-34 by the combined action of EpmA and EpmB, and then hydroxylated on the C5 position of the same residue by EpmC (if this protein is present). Lysylation is critical for the stimulatory effect of EF-P on peptide-bond formation. The lysylation moiety may extend toward the peptidyltransferase center and stabilize the terminal 3-CCA end of the tRNA. Hydroxylation of the C5 position on Lys-34 may allow additional potential stabilizing hydrogen-bond interactions with the P-tRNA.

Its subcellular location is the cytoplasm. It participates in protein biosynthesis; polypeptide chain elongation. Involved in peptide bond synthesis. Alleviates ribosome stalling that occurs when 3 or more consecutive Pro residues or the sequence PPG is present in a protein, possibly by augmenting the peptidyl transferase activity of the ribosome. Modification of Lys-34 is required for alleviation. The polypeptide is Elongation factor P (Actinobacillus pleuropneumoniae serotype 5b (strain L20)).